Reading from the N-terminus, the 430-residue chain is Enolase (430 aa).

A (2R)-2-phosphoglycerate-binding site is contributed by Gln167. The active-site Proton donor is the Glu209. Mg(2+) contacts are provided by Asp246, Glu287, and Asp314. Residues Lys339, Arg368, Ser369, and Lys390 each contribute to the (2R)-2-phosphoglycerate site. Residue Lys339 is the Proton acceptor of the active site.

Belongs to the enolase family. The cofactor is Mg(2+).

It localises to the cytoplasm. The protein localises to the secreted. The protein resides in the cell surface. It carries out the reaction (2R)-2-phosphoglycerate = phosphoenolpyruvate + H2O. The protein operates within carbohydrate degradation; glycolysis; pyruvate from D-glyceraldehyde 3-phosphate: step 4/5. In terms of biological role, catalyzes the reversible conversion of 2-phosphoglycerate (2-PG) into phosphoenolpyruvate (PEP). It is essential for the degradation of carbohydrates via glycolysis. This Prochlorococcus marinus (strain MIT 9301) protein is Enolase.